The chain runs to 225 residues: MGIKDWPEGEGPRDKLLQKGAGQLSDAELLAVLLRNGLAGLNAVDLARSLISEFGGLRNLLCAPRNQVCRLPGVGPVKYAQLQAAAELARRVAQENLQRGQVLTNPDLTRDYLMRQLADRSYEVFAVLLLDSQHRVIQFVELFRGTIDSASVYPREVVSLVLEKKAAAVIVCHNHPSGIAEPSQADRRITERLKNALATIDVSLLDHMVVGDREIVSFAERGWIN.

The 123-residue stretch at 102–224 (VLTNPDLTRD…IVSFAERGWI (123 aa)) folds into the MPN domain. Zn(2+)-binding residues include histidine 173, histidine 175, and aspartate 186. Residues 173-186 (HNHPSGIAEPSQAD) carry the JAMM motif motif.

Belongs to the UPF0758 family.

This Shewanella baltica (strain OS223) protein is UPF0758 protein Sbal223_0402.